A 452-amino-acid chain; its full sequence is Pup--protein ligase (452 aa).

Glu-9 serves as a coordination point for Mg(2+). An ATP-binding site is contributed by Arg-53. Residue Tyr-55 participates in Mg(2+) binding. The Proton acceptor role is filled by Asp-57. Mg(2+) is bound at residue Glu-63. Residues Thr-66 and Trp-419 each coordinate ATP.

Belongs to the Pup ligase/Pup deamidase family. Pup-conjugating enzyme subfamily.

The enzyme catalyses ATP + [prokaryotic ubiquitin-like protein]-L-glutamate + [protein]-L-lysine = ADP + phosphate + N(6)-([prokaryotic ubiquitin-like protein]-gamma-L-glutamyl)-[protein]-L-lysine.. It functions in the pathway protein degradation; proteasomal Pup-dependent pathway. Its pathway is protein modification; protein pupylation. In terms of biological role, catalyzes the covalent attachment of the prokaryotic ubiquitin-like protein modifier Pup to the proteasomal substrate proteins, thereby targeting them for proteasomal degradation. This tagging system is termed pupylation. The ligation reaction involves the side-chain carboxylate of the C-terminal glutamate of Pup and the side-chain amino group of a substrate lysine. This is Pup--protein ligase from Rhodococcus erythropolis (strain PR4 / NBRC 100887).